We begin with the raw amino-acid sequence, 376 residues long: Putative F-box protein At2g33200 (376 aa).

The F-box domain maps to 6-53; sequence YDWSKLCHDILRLILESLHYKDYHRARTVCSNWYTASTTCKRPLYPWR.

In Arabidopsis thaliana (Mouse-ear cress), this protein is Putative F-box protein At2g33200.